Reading from the N-terminus, the 202-residue chain is Large ribosomal subunit protein bL25 (202 aa).

The interval 180 to 202 (PKQEAFEEDAEPSPGEEPEGENQ) is disordered. Residues 185-202 (FEEDAEPSPGEEPEGENQ) show a composition bias toward acidic residues.

It belongs to the bacterial ribosomal protein bL25 family. CTC subfamily. In terms of assembly, part of the 50S ribosomal subunit; part of the 5S rRNA/L5/L18/L25 subcomplex. Contacts the 5S rRNA. Binds to the 5S rRNA independently of L5 and L18.

Functionally, this is one of the proteins that binds to the 5S RNA in the ribosome where it forms part of the central protuberance. The polypeptide is Large ribosomal subunit protein bL25 (Bacillus velezensis (strain DSM 23117 / BGSC 10A6 / LMG 26770 / FZB42) (Bacillus amyloliquefaciens subsp. plantarum)).